The following is an 858-amino-acid chain: Bifunctional uridylyltransferase/uridylyl-removing enzyme (858 aa).

Residues 1 to 324 (MSAHAAPSPE…PATSGITRVL (324 aa)) are uridylyltransferase. The segment at 325-681 (SADRFVEKQG…ARPSPIGDAL (357 aa)) is uridylyl-removing. An HD domain is found at 443-565 (VDQHILMVLR…VGNERYLTAL (123 aa)). ACT domains follow at residues 682–763 (QVLV…PSKG) and 790–858 (ILSV…AIAV).

This sequence belongs to the GlnD family. Mg(2+) is required as a cofactor.

It catalyses the reaction [protein-PII]-L-tyrosine + UTP = [protein-PII]-uridylyl-L-tyrosine + diphosphate. It carries out the reaction [protein-PII]-uridylyl-L-tyrosine + H2O = [protein-PII]-L-tyrosine + UMP + H(+). With respect to regulation, uridylyltransferase (UTase) activity is inhibited by glutamine, while glutamine activates uridylyl-removing (UR) activity. Modifies, by uridylylation and deuridylylation, the PII regulatory proteins (GlnB and homologs), in response to the nitrogen status of the cell that GlnD senses through the glutamine level. Under low glutamine levels, catalyzes the conversion of the PII proteins and UTP to PII-UMP and PPi, while under higher glutamine levels, GlnD hydrolyzes PII-UMP to PII and UMP (deuridylylation). Thus, controls uridylylation state and activity of the PII proteins, and plays an important role in the regulation of nitrogen assimilation and metabolism. The sequence is that of Bifunctional uridylyltransferase/uridylyl-removing enzyme from Burkholderia orbicola (strain AU 1054).